Reading from the N-terminus, the 385-residue chain is MSEYWLISAPGDKTCQQTWEALNQATKANNLSLNYKFPIPDLKVGTLDQLVGLSDDLGKLDTFVEGVTRKVAQYLGEVLEDQRDKLHENLTANNDDLPHYLTRFQWDMAKYPIKQSLRNIADIISKQVGQIDADLKVKSSAYNALKGNLQNLEKKQTGSLLTRNLADLVKKEHFILDSEYLTTLLVIVPKSMFNDWNANYEKITDMIVPRSTQLIHQDGDYGLFTVTLFKKVVDEFKLHARERKFVVREFAYNEADLVAGKNEITKLLTDKKKQFGPLVRWLKVNFSECFCAWIHVKALRVFVESVLRYGLPVNFQAALLVPSRRSARRLRDTLHALYAHLDHSAHHHANAQQDSVELAGLGFGQSEYYPYVFYKINIDMIEKAA.

The protein belongs to the V-ATPase C subunit family. V-ATPase is a heteromultimeric enzyme made up of two complexes: the ATP-hydrolytic V1 complex and the proton translocation V0 complex. The V1 complex consists of three catalytic AB heterodimers that form a heterohexamer, three peripheral stalks each consisting of EG heterodimers, one central rotor including subunits D and F, and the regulatory subunits C and H. The proton translocation complex V0 consists of the proton transport subunit a, a ring of proteolipid subunits c9c'', rotary subunit d, subunits e and f, and the accessory subunits VhaAC45 and ATP6AP2.

Subunit of the V1 complex of vacuolar(H+)-ATPase (V-ATPase), a multisubunit enzyme composed of a peripheral complex (V1) that hydrolyzes ATP and a membrane integral complex (V0) that translocates protons. V-ATPase is responsible for acidifying and maintaining the pH of intracellular compartments and in some cell types, is targeted to the plasma membrane, where it is responsible for acidifying the extracellular environment. Subunit C is necessary for the assembly of the catalytic sector of the enzyme and is likely to have a specific function in its catalytic activity. The polypeptide is V-type proton ATPase subunit C (Manduca sexta (Tobacco hawkmoth)).